We begin with the raw amino-acid sequence, 1182 residues long: uncharacterized protein (1182 aa).

The helical transmembrane segment at 618–638 (GSSSLVCSVMVVIFSIILYYL) threads the bilayer.

It is found in the host membrane. This is an uncharacterized protein from Callospermophilus lateralis (Golden-mantled ground squirrel).